The chain runs to 331 residues: Putative NAD(P)H nitroreductase acg (331 aa).

FMN is bound by residues 28-32 (QPWRW) and Arg-316.

Belongs to the nitroreductase family. The cofactor is FMN.

The polypeptide is Putative NAD(P)H nitroreductase acg (acg) (Mycobacterium tuberculosis (strain CDC 1551 / Oshkosh)).